Reading from the N-terminus, the 175-residue chain is uncharacterized protein (175 aa).

Residues 1–11 (METWRKGSFRN) constitute a mitochondrion transit peptide. The disordered stretch occupies residues 29-48 (QGSILSQASTAGGDHEEYSN).

The protein resides in the mitochondrion. This is an uncharacterized protein from Mus musculus (Mouse).